The primary structure comprises 359 residues: snRNA-activating protein complex subunit 2 (359 aa).

Residues 1–11 (MKPPQRRRRVP) show a composition bias toward basic residues. Disordered stretches follow at residues 1–22 (MKPP…TGPT), 157–221 (NQDG…GSST), and 291–327 (TALP…SEPI).

In terms of assembly, part of the SNAPc complex composed of 5 subunits: SNAPC1, SNAPC2, SNAPC3, SNAPC4 and SNAPC5. SNAPC2 interacts with TBP and SNAPC4.

Its subcellular location is the nucleus. Its function is as follows. Part of the SNAPc complex required for the transcription of both RNA polymerase II and III small-nuclear RNA genes. Binds to the proximal sequence element (PSE), a non-TATA-box basal promoter element common to these 2 types of genes. Recruits TBP and BRF2 to the U6 snRNA TATA box. The protein is snRNA-activating protein complex subunit 2 (Snapc2) of Mus musculus (Mouse).